A 333-amino-acid polypeptide reads, in one-letter code: tRNA pseudouridine synthase B (333 aa).

The active-site Nucleophile is the D46.

The protein belongs to the pseudouridine synthase TruB family. Type 1 subfamily.

It catalyses the reaction uridine(55) in tRNA = pseudouridine(55) in tRNA. In terms of biological role, responsible for synthesis of pseudouridine from uracil-55 in the psi GC loop of transfer RNAs. In Gluconobacter oxydans (strain 621H) (Gluconobacter suboxydans), this protein is tRNA pseudouridine synthase B.